A 327-amino-acid polypeptide reads, in one-letter code: Interleukin-12 subunit beta (327 aa).

The first 22 residues, 1-22 (MHPQQLVVSWFSLVLLASPIVA), serve as a signal peptide directing secretion. Residues 23-106 (IWELEKNVYI…LSRSLLLLHK (84 aa)) form the Ig-like C2-type domain. A disulfide bridge connects residues cysteine 50 and cysteine 90. Asparagine 223 is a glycosylation site (N-linked (GlcNAc...) asparagine). The Fibronectin type-III domain maps to 238–327 (PPKNLQLRPL…WSEWASVSCS (90 aa)).

This sequence belongs to the IL-12B family. As to quaternary structure, heterodimer with IL12A; disulfide-linked. The heterodimer is known as interleukin IL-12. Heterodimer with IL23A; disulfide-linked. The heterodimer is known as interleukin IL-23. Also secreted as a monomer. Interacts with NBR1; this interaction promotes IL-12 secretion.

Its subcellular location is the secreted. Cytokine that can act as a growth factor for activated T and NK cells, enhance the lytic activity of NK/lymphokine-activated killer cells, and stimulate the production of IFN-gamma by resting PBMC. In Bubalus carabanensis (Swamp type water buffalo), this protein is Interleukin-12 subunit beta (IL12B).